We begin with the raw amino-acid sequence, 669 residues long: DNA mismatch repair protein MutL (669 aa).

The span at 356 to 371 (FEQRQNTENKQEKTFS) shows a compositional bias: basic and acidic residues. The disordered stretch occupies residues 356–379 (FEQRQNTENKQEKTFSSEESNSKP).

The protein belongs to the DNA mismatch repair MutL/HexB family.

Its function is as follows. This protein is involved in the repair of mismatches in DNA. It is required for dam-dependent methyl-directed DNA mismatch repair. May act as a 'molecular matchmaker', a protein that promotes the formation of a stable complex between two or more DNA-binding proteins in an ATP-dependent manner without itself being part of a final effector complex. This chain is DNA mismatch repair protein MutL, found in Staphylococcus aureus (strain MRSA252).